A 163-amino-acid polypeptide reads, in one-letter code: Phosphopantetheine adenylyltransferase (163 aa).

Thr10 contacts substrate. ATP is bound by residues 10 to 11 (TF) and His18. Positions 42, 74, and 88 each coordinate substrate. ATP-binding positions include 89–91 (GLR), Glu99, and 124–130 (NSFISST).

It belongs to the bacterial CoaD family. As to quaternary structure, homohexamer. Requires Mg(2+) as cofactor.

The protein resides in the cytoplasm. It carries out the reaction (R)-4'-phosphopantetheine + ATP + H(+) = 3'-dephospho-CoA + diphosphate. It participates in cofactor biosynthesis; coenzyme A biosynthesis; CoA from (R)-pantothenate: step 4/5. Functionally, reversibly transfers an adenylyl group from ATP to 4'-phosphopantetheine, yielding dephospho-CoA (dPCoA) and pyrophosphate. The chain is Phosphopantetheine adenylyltransferase from Shewanella putrefaciens (strain CN-32 / ATCC BAA-453).